Here is a 200-residue protein sequence, read N- to C-terminus: Inner membrane-spanning protein YciB (200 aa).

Helical transmembrane passes span 7–27, 32–52, 56–76, 93–113, 126–146, and 153–173; these read HPLF…VVNA, FAAT…SYVV, VPLM…LTLV, LFAA…AIMF, ILTF…EIIW, and FWVG…AIAQ.

This sequence belongs to the YciB family.

Its subcellular location is the cell inner membrane. Plays a role in cell envelope biogenesis, maintenance of cell envelope integrity and membrane homeostasis. The chain is Inner membrane-spanning protein YciB from Bradyrhizobium sp. (strain BTAi1 / ATCC BAA-1182).